The chain runs to 303 residues: uncharacterized protein (303 aa).

4 consecutive transmembrane segments (helical) span residues 55–77 (FLVK…LFIQ), 92–111 (PAVF…TKII), 208–230 (FSLP…ATSL), and 240–257 (IPHI…KILI).

It localises to the cell membrane. This is an uncharacterized protein from Bacillus subtilis (strain 168).